The chain runs to 628 residues: Vacuolar-sorting receptor 3 (628 aa).

The first 24 residues, 1-24 (MKQLLCYLPWLLLLTLLVSPLNDA), serve as a signal peptide directing secretion. Over 25–569 (RFVVEKNSLS…SKTGAQVRSA (545 aa)) the chain is Lumenal. The 113-residue stretch at 56–168 (QYGGSMAGTV…GFGEKLKKAI (113 aa)) folds into the PA domain. 3 N-linked (GlcNAc...) asparagine glycosylation sites follow: Asn-148, Asn-294, and Asn-434. 2 EGF-like domains span residues 416 to 466 (ESNE…SHCE) and 469 to 516 (GPGR…KKCE). 7 cysteine pairs are disulfide-bonded: Cys-420–Cys-438, Cys-427–Cys-447, Cys-449–Cys-465, Cys-473–Cys-493, Cys-480–Cys-501, Cys-503–Cys-515, and Cys-545–Cys-558. The 43-residue stretch at 517 to 559 (DINECKEKKACQCPECSCKNTWGSYECSCSGDLLYIRDHDTCI) folds into the EGF-like 3; calcium-binding domain. Residues 570–590 (WAAVWLIMLSLGLAAAGAYLV) traverse the membrane as a helical segment. The Cytoplasmic segment spans residues 591 to 628 (YKYRLRQYMDSEIRAIMAQYMPLDSQPEIPNHVNDERA). The Tyrosine-based internalization motif signature appears at 610 to 613 (YMPL).

It belongs to the VSR (BP-80) family. As to expression, expressed in seeds, seedlings, roots, leaves, flowers and siliques.

The protein localises to the membrane. Its subcellular location is the golgi apparatus membrane. It is found in the cytoplasmic vesicle. The protein resides in the clathrin-coated vesicle membrane. It localises to the prevacuolar compartment membrane. In terms of biological role, vacuolar-sorting receptor (VSR) involved in clathrin-coated vesicles sorting from Golgi apparatus to vacuoles. This chain is Vacuolar-sorting receptor 3 (VSR3), found in Arabidopsis thaliana (Mouse-ear cress).